The chain runs to 100 residues: Probable DNA-binding protein HU (100 aa).

It belongs to the bacterial histone-like protein family.

Its function is as follows. Histone-like DNA-binding protein which is capable of wrapping DNA to stabilize it, and thus to prevent its denaturation under extreme environmental conditions. The chain is Probable DNA-binding protein HU (hup) from Chlamydia pneumoniae (Chlamydophila pneumoniae).